The following is a 225-amino-acid chain: 7-cyano-7-deazaguanine synthase (225 aa).

9–19 (YSGGLDSTTCL) contacts ATP. Positions 188, 198, 201, and 204 each coordinate Zn(2+).

The protein belongs to the QueC family. Requires Zn(2+) as cofactor.

The catalysed reaction is 7-carboxy-7-deazaguanine + NH4(+) + ATP = 7-cyano-7-deazaguanine + ADP + phosphate + H2O + H(+). It functions in the pathway purine metabolism; 7-cyano-7-deazaguanine biosynthesis. In terms of biological role, catalyzes the ATP-dependent conversion of 7-carboxy-7-deazaguanine (CDG) to 7-cyano-7-deazaguanine (preQ(0)). In Citrifermentans bemidjiense (strain ATCC BAA-1014 / DSM 16622 / JCM 12645 / Bem) (Geobacter bemidjiensis), this protein is 7-cyano-7-deazaguanine synthase.